The primary structure comprises 309 residues: Probable RuBisCO transcriptional regulator (309 aa).

The region spanning 5–62 is the HTH lysR-type domain; that stretch reads FTLQQLRILKAIATEKSFTRAAEVLFVSQPSLSKQIKTLESRLNISLLNRENNIVSLT. A DNA-binding region (H-T-H motif) is located at residues 22–41; sequence FTRAAEVLFVSQPSLSKQIK.

Belongs to the LysR transcriptional regulatory family.

It localises to the plastid. The protein resides in the chloroplast. Its function is as follows. Trans-acting transcriptional regulator of RuBisCO genes (rbcL and rbcS) expression. The chain is Probable RuBisCO transcriptional regulator (rbcR) from Trieres chinensis (Marine centric diatom).